The chain runs to 715 residues: Fatty acid oxidation complex subunit alpha (715 aa).

The interval 1–190 (MTTTSAFMLN…KAGLVDDVVP (190 aa)) is enoyl-CoA hydratase. The segment at 306 to 714 (GPLNSVGILG…FWTNGETDQG (409 aa)) is 3-hydroxyacyl-CoA dehydrogenase.

In the N-terminal section; belongs to the enoyl-CoA hydratase/isomerase family. The protein in the central section; belongs to the 3-hydroxyacyl-CoA dehydrogenase family. Heterotetramer of two alpha chains (FadJ) and two beta chains (FadI).

Its subcellular location is the cytoplasm. The enzyme catalyses a (3S)-3-hydroxyacyl-CoA = a (2E)-enoyl-CoA + H2O. It catalyses the reaction a 4-saturated-(3S)-3-hydroxyacyl-CoA = a (3E)-enoyl-CoA + H2O. The catalysed reaction is a (3S)-3-hydroxyacyl-CoA + NAD(+) = a 3-oxoacyl-CoA + NADH + H(+). It carries out the reaction (3S)-3-hydroxybutanoyl-CoA = (3R)-3-hydroxybutanoyl-CoA. It functions in the pathway lipid metabolism; fatty acid beta-oxidation. Its function is as follows. Catalyzes the formation of a hydroxyacyl-CoA by addition of water on enoyl-CoA. Also exhibits 3-hydroxyacyl-CoA epimerase and 3-hydroxyacyl-CoA dehydrogenase activities. The chain is Fatty acid oxidation complex subunit alpha from Salmonella choleraesuis (strain SC-B67).